Here is a 662-residue protein sequence, read N- to C-terminus: Bifunctional polymyxin resistance protein ArnA (662 aa).

The tract at residues 1 to 307 (MTSKAVVFAY…ELGLVEGARL (307 aa)) is formyltransferase ArnAFT. Catalysis depends on H106, which acts as the Proton donor; for formyltransferase activity. Residues R116 and 138 to 142 (IERAD) each bind (6R)-10-formyltetrahydrofolate. Residues 316-662 (RRTRVLILGV…EALREREAQA (347 aa)) form a dehydrogenase ArnADH region. Residues D349 and 370–371 (DI) each bind NAD(+). UDP-alpha-D-glucuronate is bound by residues A395, Y400, and 434-435 (TS). The active-site Proton acceptor; for decarboxylase activity is the E436. UDP-alpha-D-glucuronate is bound by residues R462, N493, 527–536 (RLVDGGAQKR), and Y614. R620 serves as the catalytic Proton donor; for decarboxylase activity.

This sequence in the N-terminal section; belongs to the Fmt family. UDP-L-Ara4N formyltransferase subfamily. The protein in the C-terminal section; belongs to the NAD(P)-dependent epimerase/dehydratase family. UDP-glucuronic acid decarboxylase subfamily. Homohexamer, formed by a dimer of trimers.

The enzyme catalyses UDP-alpha-D-glucuronate + NAD(+) = UDP-beta-L-threo-pentopyranos-4-ulose + CO2 + NADH. It catalyses the reaction UDP-4-amino-4-deoxy-beta-L-arabinose + (6R)-10-formyltetrahydrofolate = UDP-4-deoxy-4-formamido-beta-L-arabinose + (6S)-5,6,7,8-tetrahydrofolate + H(+). It participates in nucleotide-sugar biosynthesis; UDP-4-deoxy-4-formamido-beta-L-arabinose biosynthesis; UDP-4-deoxy-4-formamido-beta-L-arabinose from UDP-alpha-D-glucuronate: step 1/3. It functions in the pathway nucleotide-sugar biosynthesis; UDP-4-deoxy-4-formamido-beta-L-arabinose biosynthesis; UDP-4-deoxy-4-formamido-beta-L-arabinose from UDP-alpha-D-glucuronate: step 3/3. Its pathway is bacterial outer membrane biogenesis; lipopolysaccharide biosynthesis. In terms of biological role, bifunctional enzyme that catalyzes the oxidative decarboxylation of UDP-glucuronic acid (UDP-GlcUA) to UDP-4-keto-arabinose (UDP-Ara4O) and the addition of a formyl group to UDP-4-amino-4-deoxy-L-arabinose (UDP-L-Ara4N) to form UDP-L-4-formamido-arabinose (UDP-L-Ara4FN). The modified arabinose is attached to lipid A and is required for resistance to polymyxin and cationic antimicrobial peptides. The chain is Bifunctional polymyxin resistance protein ArnA from Pseudomonas aeruginosa (strain LESB58).